Consider the following 588-residue polypeptide: Transcription factor 7-like 1 (588 aa).

Residues 1-31 (MPQLGGGGGGGGGGSGGGGGSSAGAAGGGDD) are compositionally biased toward gly residues. A CTNNB1-binding region spans residues 1-74 (MPQLGGGGGG…VKSSLVNESE (74 aa)). Disordered stretches follow at residues 1 to 101 (MPQL…PRDY), 203 to 234 (SPGS…SPYY), and 409 to 506 (LYPT…LSLT). Positions 67 to 81 (SSLVNESENQSSSSD) are enriched in low complexity. A compositionally biased stretch (basic and acidic residues) spans 83–101 (EAERRPQPVRDTFQKPRDY). The HMG box DNA-binding region spans 346 to 414 (VKKPLNAFML…LHSQLYPTWS (69 aa)). Positions 421–427 (KKKKRKR) match the Nuclear localization signal motif. 2 stretches are compositionally biased toward low complexity: residues 431-441 (LSQTQSQQQVQ) and 478-497 (SPAT…ATHS).

Belongs to the TCF/LEF family. As to quaternary structure, binds the armadillo repeat of CTNNB1 and forms a stable complex. Interacts with DAZAP2. As to expression, detected in hair follicles and skin keratinocytes, and at lower levels in stomach epithelium.

The protein localises to the nucleus. Its function is as follows. Participates in the Wnt signaling pathway. Binds to DNA and acts as a repressor in the absence of CTNNB1, and as an activator in its presence. Necessary for the terminal differentiation of epidermal cells, the formation of keratohyalin granules and the development of the barrier function of the epidermis. Down-regulates NQO1, leading to increased mitomycin c resistance. This Homo sapiens (Human) protein is Transcription factor 7-like 1 (TCF7L1).